We begin with the raw amino-acid sequence, 149 residues long: NPC intracellular cholesterol transporter 2 (149 aa).

An N-terminal signal peptide occupies residues 1 to 19 (MRFLAATILLLALVAASQA). 3 cysteine pairs are disulfide-bonded: Cys-27–Cys-140, Cys-42–Cys-47, and Cys-93–Cys-99. 2 N-linked (GlcNAc...) asparagine glycosylation sites follow: Asn-58 and Asn-69. Residue Lys-116 is modified to N6-acetyllysine.

This sequence belongs to the NPC2 family. Interacts with NPC1 (via the second lumenal domain) in a cholestrol-dependent manner. Interacts with NUS1/NgBR, the interaction stabilizes NCP2 and regulates cholesterol trafficking. Interacts with DHDDS. Interacts with NEDD4L (via C2 domain). Interacts with NPC1L1. Post-translationally, N-glycosylated. As to expression, detected in liver and bile. Detected in epididymis (at protein level). Detected in caput epididymis, corpus epididymis, cauda epididymis and ovary.

It localises to the secreted. The protein resides in the endoplasmic reticulum. The protein localises to the lysosome. The enzyme catalyses cholesterol(in) = cholesterol(out). Its function is as follows. Intracellular cholesterol transporter which acts in concert with NPC1 and plays an important role in the egress of cholesterol from the lysosomal compartment. Unesterified cholesterol that has been released from LDLs in the lumen of the late endosomes/lysosomes is transferred by NPC2 to the cholesterol-binding pocket in the N-terminal domain of NPC1. May bind and mobilize cholesterol that is associated with membranes. NPC2 binds cholesterol with a 1:1 stoichiometry. Can bind a variety of sterols, including lathosterol, desmosterol and the plant sterols stigmasterol and beta-sitosterol. The secreted form of NCP2 regulates biliary cholesterol secretion via stimulation of ABCG5/ABCG8-mediated cholesterol transport. This Mus musculus (Mouse) protein is NPC intracellular cholesterol transporter 2.